The chain runs to 76 residues: Glutathione S-transferase (76 aa).

Residues 1–40 (XVAFETVPVDLMKGEHKQPAYLALQPFGTVPAVVDGDYXL) form the GST N-terminal domain. Residues 41–76 (LSAVLDVYEAHLHGYLAGDFVSLADLAHLPFTDYLV) enclose the GST C-terminal domain.

Belongs to the GST superfamily. Theta family.

Its subcellular location is the cytoplasm. The enzyme catalyses RX + glutathione = an S-substituted glutathione + a halide anion + H(+). Its function is as follows. Conjugation of reduced glutathione to a wide number of exogenous and endogenous hydrophobic electrophiles. The chain is Glutathione S-transferase from Brassica oleracea var. italica (Broccoli).